Reading from the N-terminus, the 266-residue chain is 4-hydroxy-tetrahydrodipicolinate reductase (266 aa).

NAD(+) is bound by residues G8–M13 and E33. Residue R34 coordinates NADP(+). NAD(+) is bound by residues G97–T99 and A121–M124. H154 functions as the Proton donor/acceptor in the catalytic mechanism. (S)-2,3,4,5-tetrahydrodipicolinate is bound at residue H155. K158 (proton donor) is an active-site residue. G164–T165 provides a ligand contact to (S)-2,3,4,5-tetrahydrodipicolinate.

Belongs to the DapB family.

It is found in the cytoplasm. The enzyme catalyses (S)-2,3,4,5-tetrahydrodipicolinate + NAD(+) + H2O = (2S,4S)-4-hydroxy-2,3,4,5-tetrahydrodipicolinate + NADH + H(+). The catalysed reaction is (S)-2,3,4,5-tetrahydrodipicolinate + NADP(+) + H2O = (2S,4S)-4-hydroxy-2,3,4,5-tetrahydrodipicolinate + NADPH + H(+). Its pathway is amino-acid biosynthesis; L-lysine biosynthesis via DAP pathway; (S)-tetrahydrodipicolinate from L-aspartate: step 4/4. Functionally, catalyzes the conversion of 4-hydroxy-tetrahydrodipicolinate (HTPA) to tetrahydrodipicolinate. This is 4-hydroxy-tetrahydrodipicolinate reductase from Geobacter sulfurreducens (strain ATCC 51573 / DSM 12127 / PCA).